An 862-amino-acid chain; its full sequence is Valine--tRNA ligase (862 aa).

The short motif at 43–53 is the 'HIGH' region element; sequence PNVTGSLHMGH. 8 residues coordinate Zn(2+): cysteine 176, cysteine 179, cysteine 344, cysteine 347, cysteine 417, cysteine 420, cysteine 438, and cysteine 441. A 'KMSKS' region motif is present at residues 528-532; that stretch reads KMSKS. Lysine 531 contributes to the ATP binding site. Residues 802–862 adopt a coiled-coil conformation; that stretch reads RRRQEKRLKE…RIREALSQIG (61 aa).

The protein belongs to the class-I aminoacyl-tRNA synthetase family. ValS type 1 subfamily. As to quaternary structure, monomer. Zn(2+) serves as cofactor.

The protein localises to the cytoplasm. It carries out the reaction tRNA(Val) + L-valine + ATP = L-valyl-tRNA(Val) + AMP + diphosphate. In terms of biological role, catalyzes the attachment of valine to tRNA(Val). As ValRS can inadvertently accommodate and process structurally similar amino acids such as threonine, to avoid such errors, it has a 'posttransfer' editing activity that hydrolyzes mischarged Thr-tRNA(Val) in a tRNA-dependent manner. This chain is Valine--tRNA ligase, found in Thermus thermophilus (strain ATCC BAA-163 / DSM 7039 / HB27).